The chain runs to 567 residues: Wee1-like protein kinase 2 (567 aa).

2 stretches are compositionally biased toward basic and acidic residues: residues 1-12 (MDDSSINKELKQ) and 26-36 (EGQKEAPESRE). Disordered stretches follow at residues 1–103 (MDDS…DSRS) and 170–191 (RSNG…EGKV). Position 77 is a phosphoserine (Ser-77). The Nuclear localization signal motif lies at 174 to 176 (KRK). Residues 215 to 494 (FLEVEKIGVG…ARSRVLRPSL (280 aa)) enclose the Protein kinase domain. ATP contacts are provided by residues 221 to 229 (IGVGEFGTV) and Lys-244. The Nuclear export signal motif lies at 318–332 (KLKDILLQISLGLKY). Residue Asp-342 is the Proton acceptor of the active site. The Mg(2+) site is built by Asn-347 and Asp-384. The stretch at 497 to 523 (AEELQQQLNLEKSKTATLERELREAQQ) forms a coiled coil. The segment at 502-567 (QQLNLEKSKT…SSFTCGKSSP (66 aa)) is disordered. The span at 507–520 (EKSKTATLERELRE) shows a compositional bias: basic and acidic residues. Over residues 555–567 (AKSSSFTCGKSSP) the composition is skewed to polar residues.

Belongs to the protein kinase superfamily. Ser/Thr protein kinase family. WEE1 subfamily. Phosphorylation leads to increase its activity.

It is found in the nucleus. It catalyses the reaction L-tyrosyl-[protein] + ATP = O-phospho-L-tyrosyl-[protein] + ADP + H(+). Oocyte-specific protein tyrosine kinase that phosphorylates and inhibits CDK1 and acts as a key regulator of meiosis during both prophase I and metaphase II. Required to maintain meiotic arrest in oocytes during the germinal vesicle (GV) stage, a long period of quiescence at dictyate prophase I, by phosphorylating CDK1 at 'Tyr-15', leading to inhibit CDK1 activity and prevent meiotic reentry. Also required for metaphase II exit during egg activation by phosphorylating CDK1 at 'Tyr-15', to ensure exit from meiosis in oocytes and promote pronuclear formation. This Canis lupus familiaris (Dog) protein is Wee1-like protein kinase 2 (WEE2).